Consider the following 450-residue polypeptide: Phosphoglucosamine mutase (450 aa).

Catalysis depends on Ser-102, which acts as the Phosphoserine intermediate. The Mg(2+) site is built by Ser-102, Asp-244, Asp-246, and Asp-248. Residue Ser-102 is modified to Phosphoserine.

This sequence belongs to the phosphohexose mutase family. Mg(2+) serves as cofactor. Activated by phosphorylation.

It carries out the reaction alpha-D-glucosamine 1-phosphate = D-glucosamine 6-phosphate. Its function is as follows. Catalyzes the conversion of glucosamine-6-phosphate to glucosamine-1-phosphate. The polypeptide is Phosphoglucosamine mutase (Bartonella bacilliformis (strain ATCC 35685 / KC583 / Herrer 020/F12,63)).